The chain runs to 478 residues: Hepatitis A virus cellular receptor 1 (478 aa).

A signal peptide spans 1–24; sequence MADPIMHLQVVILSLILHLADSVA. The 102-residue stretch at 25-126 folds into the Ig-like V-type domain; the sequence is DSVNVDGVAG…WFNDMKITIS (102 aa). The Extracellular portion of the chain corresponds to 25–397; that stretch reads DSVNVDGVAG…SPQMVNTTEG (373 aa). Intrachain disulfides connect Cys-41–Cys-110, Cys-51–Cys-62, and Cys-57–Cys-109. Asn-70 and Asn-87 each carry an N-linked (GlcNAc...) asparagine glycan. Repeat copies occupy residues 148-155, 156-161, 162-167, 168-173, 174-179, 180-185, 186-191, 192-197, 198-201, 202-207, 208-211, 212-217, 218-221, 222-227, 228-233, 234-239, 240-245, 246-251, 252-257, 258-263, 264-268, 269-273, 274-279, 280-285, 286-291, 292-297, 298-303, and 304-309. A 28 X 6 AA approximate tandem repeats of L-P-[MT]-T-[MT]-T region spans residues 148 to 309; sequence VPTTTTTTLP…TTTTLPTTTM (162 aa). The interval 187 to 303 is disordered; the sequence is PTTTTVPMTT…TTTTLPTTTT (117 aa). Disordered stretches follow at residues 320–339 and 344–370; these read PMQD…PAET and LLGA…TVTE. Polar residues predominate over residues 348–370; that stretch reads TRTQPTSSPLYSYTTDGSDTVTE. Asn-379 and Asn-393 each carry an N-linked (GlcNAc...) asparagine glycan. A helical membrane pass occupies residues 398 to 418; the sequence is IYAGVCISVLVLLAVLGVVIA. The Cytoplasmic segment spans residues 419–478; the sequence is KKYFFKKEIQQLSVSFSNHQFKTLQNAVKKEVHAEDNIYIENNLYAMNQDPVVLFESLRP.

The protein belongs to the immunoglobulin superfamily. TIM family. In terms of assembly, interacts with STAM. Interacts with SELPLG.

The protein localises to the cell membrane. In terms of biological role, phosphatidylserine receptor that plays an important functional role in regulatory B-cells homeostasis including generation, expansion and suppressor functions. As P-selectin/SELPLG ligand, plays a specialized role in activated but not naive T-cell trafficking during inflammatory responses. Controls thereby T-cell accumulation in the inflamed central nervous system (CNS) and the induction of autoimmune disease. Also regulates expression of various anti-inflammatory cytokines and co-inhibitory ligands including IL10. Acts as a regulator of T-cell proliferation. May play a role in kidney injury and repair. This Chlorocebus aethiops (Green monkey) protein is Hepatitis A virus cellular receptor 1 (HAVCR1).